A 155-amino-acid polypeptide reads, in one-letter code: Small ribosomal subunit protein uS7cz/uS7cy (155 aa).

It belongs to the universal ribosomal protein uS7 family. As to quaternary structure, part of the 30S ribosomal subunit.

Its subcellular location is the plastid. The protein localises to the chloroplast. In terms of biological role, one of the primary rRNA binding proteins, it binds directly to 16S rRNA where it nucleates assembly of the head domain of the 30S subunit. The protein is Small ribosomal subunit protein uS7cz/uS7cy (rps7-A) of Phaseolus vulgaris (Kidney bean).